Consider the following 50-residue polypeptide: Fungus-induced protein 3 (50 aa).

This chain is Fungus-induced protein 3 (fip-3), found in Caenorhabditis elegans.